The sequence spans 623 residues: MPHSDELDSRDVLSVSGLNIAFHHEGQQVDAVRNVSLRLKRGETLAIVGESGSGKSVTALALMRLIEQSGANVRCGEMLLRRRNRQVIELSEQSDAQMRRVRGADIAMIFQEPMTSLNPVFTVGEQIAESIRLHQGASHEEALAEAKRMLDQVRIPESQAILSRYPHQLSGGMRQRVMIAMALSCRPAVLIADEPTTALDVTIQAQILQLIKVLQQEMSMGVIFITHDMGVVADIADRVLVMYQGEAVETGSVEQIFHAPTHPYTQTLLAAVPQLGAMRGHSLPRRFPLISADEPALYESQIEQDTVVEGEPILQVRGLVTRFPLRSGLFNRVTREVHAVENISFDLWPGETLSLVGESGSGKSTTGRALLRLVESRQGEIIFNGQRIDTLSAGKLQPLRRDIQCIFQDPYASLDPRQTVGYSIMEPLRIHGLGQGDAAAKRVAWLLERVGLRPEHAWRYPHEFSGGQRQRICIARALALNPKVIIADEAVSALDVSVRGQIINLLLDLQREMGIAYLFISHDMAVVERISHRVAVMYLGQIVEMGPRRAVFENPQHPYTRKLMAAVPVADPSRHRPRRVLLSDDIPSNIHKRGEETPAVSLQLVGPGHYVARPLQDNALSRL.

ABC transporter domains lie at 15 to 269 (VSGL…QTLL) and 325 to 564 (LRSG…RKLM). Residues 49–56 (GESGSGKS) and 357–364 (GESGSGKS) contribute to the ATP site.

This sequence belongs to the ABC transporter superfamily. Glutathione importer (TC 3.A.1.5.11) family. In terms of assembly, the complex is composed of two ATP-binding proteins (GsiA), two transmembrane proteins (GsiC and GsiD) and a solute-binding protein (GsiB).

Its subcellular location is the cell inner membrane. It carries out the reaction glutathione(out) + ATP + H2O = glutathione(in) + ADP + phosphate + H(+). Its function is as follows. Part of the ABC transporter complex GsiABCD involved in glutathione import. Responsible for energy coupling to the transport system. The polypeptide is Glutathione import ATP-binding protein GsiA (Salmonella typhimurium (strain LT2 / SGSC1412 / ATCC 700720)).